The sequence spans 125 residues: Thioredoxin H-type (125 aa).

A Thioredoxin domain is found at Ala-2 to Ala-112. Catalysis depends on nucleophile residues Cys-38 and Cys-41. A disulfide bond links Cys-38 and Cys-41.

Belongs to the thioredoxin family. Plant H-type subfamily.

It is found in the cytoplasm. Functionally, participates in various redox reactions through the reversible oxidation of the active center dithiol to a disulfide. The H form is known to activate a number of cytosolic enzymes. The protein is Thioredoxin H-type (SB09) of Picea mariana (Black spruce).